A 487-amino-acid chain; its full sequence is Glutamyl-tRNA(Gln) amidotransferase subunit A (487 aa).

Catalysis depends on charge relay system residues K80 and S155. The active-site Acyl-ester intermediate is S179.

The protein belongs to the amidase family. GatA subfamily. Heterotrimer of A, B and C subunits.

The catalysed reaction is L-glutamyl-tRNA(Gln) + L-glutamine + ATP + H2O = L-glutaminyl-tRNA(Gln) + L-glutamate + ADP + phosphate + H(+). Functionally, allows the formation of correctly charged Gln-tRNA(Gln) through the transamidation of misacylated Glu-tRNA(Gln) in organisms which lack glutaminyl-tRNA synthetase. The reaction takes place in the presence of glutamine and ATP through an activated gamma-phospho-Glu-tRNA(Gln). This is Glutamyl-tRNA(Gln) amidotransferase subunit A from Chloroflexus aurantiacus (strain ATCC 29366 / DSM 635 / J-10-fl).